Consider the following 273-residue polypeptide: MERSVFYISDGTAITAEVLGHAVLSQFPVKATTFTLPFVESATRAQEVCEKINEIYRETGVRPLVFYSIISPEVRELIQHSEGFCQDIVQALVAPLQGELGVSPQPVLNRTHGLTESNLGKYDARIAAIDYALAHDDGISLRNLDQAQVILLGVSRCGKTPTSLYLAMQFGIRAANYPFIADDMDNLQLPAALKPFQHKLFGLTINPERLAAIREERRENSRYASLRQCRMEVGEVEALFRKNQIRYLNSTNYSVEEISTKILDILGMSRRMF.

153–160 lines the ADP pocket; sequence GVSRCGKT.

This sequence belongs to the pyruvate, phosphate/water dikinase regulatory protein family. PSRP subfamily.

It carries out the reaction [pyruvate, water dikinase] + ADP = [pyruvate, water dikinase]-phosphate + AMP + H(+). It catalyses the reaction [pyruvate, water dikinase]-phosphate + phosphate + H(+) = [pyruvate, water dikinase] + diphosphate. Its function is as follows. Bifunctional serine/threonine kinase and phosphorylase involved in the regulation of the phosphoenolpyruvate synthase (PEPS) by catalyzing its phosphorylation/dephosphorylation. In Yersinia enterocolitica serotype O:8 / biotype 1B (strain NCTC 13174 / 8081), this protein is Putative phosphoenolpyruvate synthase regulatory protein.